Consider the following 601-residue polypeptide: Glutamine--fructose-6-phosphate aminotransferase [isomerizing] (601 aa).

The active-site Nucleophile; for GATase activity is cysteine 2. The 217-residue stretch at cysteine 2–aspartate 218 folds into the Glutamine amidotransferase type-2 domain. SIS domains are found at residues isoleucine 284–arginine 423 and isoleucine 453–proline 591. Lysine 596 functions as the For Fru-6P isomerization activity in the catalytic mechanism.

Homodimer.

The protein localises to the cytoplasm. It catalyses the reaction D-fructose 6-phosphate + L-glutamine = D-glucosamine 6-phosphate + L-glutamate. Catalyzes the first step in hexosamine metabolism, converting fructose-6P into glucosamine-6P using glutamine as a nitrogen source. The chain is Glutamine--fructose-6-phosphate aminotransferase [isomerizing] from Staphylococcus epidermidis (strain ATCC 35984 / DSM 28319 / BCRC 17069 / CCUG 31568 / BM 3577 / RP62A).